The primary structure comprises 208 residues: Protein-L-isoaspartate O-methyltransferase (208 aa).

Ser59 is a catalytic residue.

This sequence belongs to the methyltransferase superfamily. L-isoaspartyl/D-aspartyl protein methyltransferase family.

The protein localises to the cytoplasm. The catalysed reaction is [protein]-L-isoaspartate + S-adenosyl-L-methionine = [protein]-L-isoaspartate alpha-methyl ester + S-adenosyl-L-homocysteine. Functionally, catalyzes the methyl esterification of L-isoaspartyl residues in peptides and proteins that result from spontaneous decomposition of normal L-aspartyl and L-asparaginyl residues. It plays a role in the repair and/or degradation of damaged proteins. The sequence is that of Protein-L-isoaspartate O-methyltransferase from Vibrio atlanticus (strain LGP32) (Vibrio splendidus (strain Mel32)).